The sequence spans 1359 residues: Regulatory-associated protein of TOR 2 (1359 aa).

Disordered regions lie at residues serine 17–alanine 64 and serine 782–aspartate 819. The span at histidine 32–valine 50 shows a compositional bias: basic and acidic residues. Positions serine 782 to methionine 805 are enriched in polar residues. Residues histidine 806–aspartate 819 are compositionally biased toward low complexity. 7 WD repeats span residues arginine 1041–threonine 1080, serine 1087–lysine 1127, arginine 1139–isoleucine 1178, threonine 1181–tyrosine 1221, proline 1228–leucine 1269, alanine 1273–isoleucine 1312, and glutamine 1321–arginine 1359.

It belongs to the WD repeat RAPTOR family. In terms of assembly, the target of rapamycin complex 1 (TORC1) is composed of at least RAPTOR, LST8 and TOR.

Functionally, component of TORC1 complex, which is an essential cell growth regulator that controls plant development. Acts by recruiting substrates for TOR. Acts by activating transcription, protein synthesis and ribosome biogenesis, and inhibiting mRNA degradation and autophagy. This is Regulatory-associated protein of TOR 2 (RAPTOR2) from Oryza sativa subsp. japonica (Rice).